A 745-amino-acid chain; its full sequence is Elongation factor G, mitochondrial (745 aa).

The region spanning 40-317 is the tr-type G domain; that stretch reads ERIRNIGISA…AVLDYLPNPG (278 aa). GTP is bound by residues 49 to 56, 116 to 120, and 170 to 173; these read AHIDSGKT, DTPGH, and NKLD.

Belongs to the TRAFAC class translation factor GTPase superfamily. Classic translation factor GTPase family. EF-G/EF-2 subfamily.

The protein localises to the mitochondrion. Its pathway is protein biosynthesis; polypeptide chain elongation. In terms of biological role, mitochondrial GTPase that catalyzes the GTP-dependent ribosomal translocation step during translation elongation. During this step, the ribosome changes from the pre-translocational (PRE) to the post-translocational (POST) state as the newly formed A-site-bound peptidyl-tRNA and P-site-bound deacylated tRNA move to the P and E sites, respectively. Catalyzes the coordinated movement of the two tRNA molecules, the mRNA and conformational changes in the ribosome. Essential during development as it acts as a retrograde signal from mitochondria to the nucleus to slow down cell proliferation if mitochondrial energy output is low. The sequence is that of Elongation factor G, mitochondrial from Drosophila melanogaster (Fruit fly).